A 310-amino-acid chain; its full sequence is Upstream stimulatory factor 1 (310 aa).

Over residues 1-17 the composition is skewed to polar residues; sequence MKGQQKTAETEEGTVQI. Disordered stretches follow at residues 1–26 and 171–209; these read MKGQQKTAETEEGTVQIQEGAVATGE and QGGSQRSIAPRTHPYSPKSEAPRTTRDEKRRAQHNEVER. The segment covering 190–209 has biased composition (basic and acidic residues); sequence EAPRTTRDEKRRAQHNEVER. Residues 199-254 enclose the bHLH domain; the sequence is KRRAQHNEVERRRRDKINNWIVQLSKIIPDCSMESTKSGQSKGGILSKACDYIQEL. Positions 271-292 are leucine-zipper; sequence LQLDNDVLRQQVEDLKNKNLLL. A Glycyl lysine isopeptide (Lys-Gly) (interchain with G-Cter in SUMO2) cross-link involves residue Lys-306.

In terms of assembly, efficient DNA binding requires dimerization with another bHLH protein. Binds DNA as a homodimer or a heterodimer (USF1/USF2).

The protein localises to the nucleus. Its function is as follows. Transcription factor that binds to a symmetrical DNA sequence (E-boxes) (5'-CACGTG-3') that is found in a variety of viral and cellular promoters. This is Upstream stimulatory factor 1 (USF1) from Bos taurus (Bovine).